A 511-amino-acid polypeptide reads, in one-letter code: Aldehyde dehydrogenase 2, mitochondrial (511 aa).

The N-terminal 21 residues, 1–21 (MSKSKTKTDKRNQSSLSRIKL), are a transit peptide targeting the mitochondrion. The segment at 72-92 (VSEKSQHDSTEEDITQVSEKS) is disordered. 274 to 279 (GSTLVG) serves as a coordination point for NAD(+). E297 acts as the Proton acceptor in catalysis. The active-site Nucleophile is the C331.

This sequence belongs to the aldehyde dehydrogenase family.

The protein localises to the mitochondrion matrix. It carries out the reaction an aldehyde + NAD(+) + H2O = a carboxylate + NADH + 2 H(+). The protein operates within alcohol metabolism; ethanol degradation; acetate from ethanol: step 2/2. This is Aldehyde dehydrogenase 2, mitochondrial (ALD2) from Saccharomyces cerevisiae (Baker's yeast).